Here is a 698-residue protein sequence, read N- to C-terminus: Protein let-99 (698 aa).

Residues 23–107 (FRSNLSLKTN…SESRIYLFMK (85 aa)) form the DEP domain. 2 disordered regions span residues 115-188 (PKPR…DDEI) and 653-672 (ITRS…QASP). Over residues 146-157 (RPPKARLPRRLS) the composition is skewed to basic residues. Residues 178 to 188 (HGFDDHKDDEI) show a composition bias toward basic and acidic residues.

It localises to the cytoplasm. Its subcellular location is the cell cortex. In terms of biological role, required for the proper orientation of spindles after the establishment of polarity. May play a role in interactions between the astral microtubules and the cortical cytoskeleton. Required for asymmetric forces on nuclei and spindles. Acts downstream of the PAR signaling as an intermediate that transduces polarity information to the machinery that positions the mitotic spindle, possibly by regulating force generation. Regulates gpr-1/2 asymmetric cortical localization during the first embryonic cell divisions. Acts antagonistically to the gpr-1/2 signaling pathway. Regulates mes-1 expression and/or localization pattern during early embryogenesis. The protein is Protein let-99 (let-99) of Caenorhabditis elegans.